Here is an 857-residue protein sequence, read N- to C-terminus: Facilitated trehalose transporter Tret1-1 (857 aa).

Disordered stretches follow at residues 1-27 and 92-203; these read MSGR…GKLK and SFRP…KATS. At 1 to 392 the chain is on the cytoplasmic side; sequence MSGRDNRGAG…VYRPTTNPIY (392 aa). Basic and acidic residues predominate over residues 134–143; sequence EIREHRDRQQ. Positions 171–181 are enriched in polar residues; the sequence is GNSNTNSNKAA. Phosphoserine occurs at positions 248, 249, 250, 320, and 322. The disordered stretch occupies residues 327 to 346; the sequence is LTSRQHFQQQRSISTDSRKS. Positions 330-341 are enriched in polar residues; the sequence is RQHFQQQRSIST. The helical transmembrane segment at 393-413 threads the bilayer; that stretch reads IWTQVLAALSVSLGSLVVGFV. Residues 414–440 are Extracellular-facing; it reads SAYTSPALVSMTDRNITSFEVTQDAGS. Residue N428 is glycosylated (N-linked (GlcNAc...) asparagine). A helical transmembrane segment spans residues 441-461; that stretch reads WVGGIMPLAALAGGITGGPLI. Over 462–473 the chain is Cytoplasmic; sequence EYLGRRNTILAT. The chain crosses the membrane as a helical span at residues 474–494; sequence AVPFIVSSLLIACAVNVAMVL. The Extracellular portion of the chain corresponds to 495–497; it reads CGR. Residues 498–518 traverse the membrane as a helical segment; it reads FLAGFCVGIASLSLPVYLGET. Topologically, residues 519–528 are cytoplasmic; sequence VQPEVRGTLG. A helical membrane pass occupies residues 529–549; that stretch reads LLPTAFGNIGILLCFVAGSFM. The N-linked (GlcNAc...) asparagine glycan is linked to N550. The Extracellular segment spans residues 550–552; it reads NWS. A helical transmembrane segment spans residues 553-573; sequence MLAFLGAALPVPFLILMFLIP. Topologically, residues 574–636 are cytoplasmic; it reads ETPRWFVGRG…ELLKLNNLKP (63 aa). A helical membrane pass occupies residues 637–657; that stretch reads LSISLGLMFFQQFSGINAVIF. Over 658 to 673 the chain is Extracellular; that stretch reads YTVQIFKDAGSTIDGN. Residues 674–694 traverse the membrane as a helical segment; the sequence is LCTIIVGIVNFLATFIGIVLI. Residues 695 to 700 are Cytoplasmic-facing; it reads DRAGRK. The chain crosses the membrane as a helical span at residues 701–721; the sequence is ILLYVSDIAMVLTLFVLGGFF. Over 722–740 the chain is Extracellular; the sequence is YCKANGPDVSHLGWLPLTC. Residues 741 to 761 traverse the membrane as a helical segment; sequence FVIYILGFSLGFGPIPWLMMG. The Cytoplasmic portion of the chain corresponds to 762–767; that stretch reads EILPAK. The helical transmembrane segment at 768-788 threads the bilayer; sequence IRGSAASVATAFNWFCTFVVT. At 789–801 the chain is on the extracellular side; that stretch reads KTFQDLTVAMGAH. The chain crosses the membrane as a helical span at residues 802–822; the sequence is GAFWLFGAICFVGLFFVIIYV. Topologically, residues 823–857 are cytoplasmic; it reads PETQGKTLEDIERKMMGRVRRMSSVANIKPLSFNM. S845 and S846 each carry phosphoserine.

Belongs to the major facilitator superfamily. Sugar transporter (TC 2.A.1.1) family. Trehalose transporter subfamily.

It localises to the cell membrane. Its function is as follows. Low-capacity facilitative transporter for trehalose. Does not transport maltose, sucrose or lactose. Mediates the bidirectional transfer of trehalose. Responsible for the transport of trehalose synthesized in the fat body and the incorporation of trehalose into other tissues that require a carbon source, thereby regulating trehalose levels in the hemolymph. In Drosophila sechellia (Fruit fly), this protein is Facilitated trehalose transporter Tret1-1.